Consider the following 163-residue polypeptide: Protein VASCULATURE COMPLEXITY AND CONNECTIVITY (163 aa).

Residues 1-27 (MTKIGGILVCLVIVGLDVAAAILGIQA) form the signal peptide. A run of 3 helical transmembrane segments spans residues 54–74 (LGLG…LVGG), 95–115 (MACL…IVIG), and 133–153 (FLSI…AYYV).

This sequence belongs to the DESIGUAL family. Interacts with OPS. In terms of tissue distribution, expressed in vascular cells, mostly in hypocotyls, and, to a lower extent, in seedlings, roots, flowers, siliques, developing leaves and inflorescences, but barely in mature leaves and seeds. High levels in leaf primordia.

Its subcellular location is the endoplasmic reticulum membrane. Required, together with OPS, for embryo provasculature development and cotyledon vascular complexity and connectivity. Necessary, partially redundantly with DEAL2 and DEAL3, to ensure bilateral symmetry development and early leaf margin patterning, probably via the regulation of auxin and CUC2 distribution. Regulates cell proliferation but not cell expansion. This Arabidopsis thaliana (Mouse-ear cress) protein is Protein VASCULATURE COMPLEXITY AND CONNECTIVITY.